The primary structure comprises 801 residues: Squamosa promoter-binding-like protein 7 (801 aa).

2 disordered regions span residues 1 to 23 (MSSL…LVND) and 59 to 91 (SPPL…DRVR). Residues 135-212 (VARCQVPDCE…ERHNNRRKRK (78 aa)) form an SBP-type; atypical zinc finger. C138, C143, C160, C163, C179, C182, H186, and C198 together coordinate Zn(2+). The Bipartite nuclear localization signal signature appears at 195 to 211 (KRSCRRKLERHNNRRKR). The span at 203–213 (ERHNNRRKRKP) shows a compositional bias: basic residues. Disordered regions lie at residues 203-258 (ERHN…PSLI) and 286-313 (GSGE…NKSA). Residues 222 to 233 (EQQQVLSQNDNS) show a composition bias toward polar residues. Over residues 249-258 (QRAEEEPSLI) the composition is skewed to basic and acidic residues. Positions 304-313 (SPSNGDNKSA) are enriched in polar residues.

Homodimer. Interacts with KIN17. Interacts with HY5. Zn(2+) serves as cofactor. Expressed in roots rosette leaves, cauline leaves, stems, flowers and siliques.

It is found in the nucleus speckle. In terms of biological role, transcription factor that participates in reprogramming global gene expression during copper deficiency in order to improve the metal uptake and prioritize its distribution to copper proteins of major importance. Binds directly to 5'-GTAC-3' motifs in the microRNA (miRNA) promoter of the stress-responsive miRNAs miR398b and miR398c to activate their transcription. During copper deficiency, activates the copper transporters COPT1 and COPT2, and the copper chaperone CCH, directly or indirectly via miRNAs. Required for the expression of the miRNAs miR397, miR408 and miR857. Acts coordinately with HY5 to regulate miR408 and its target genes in response to changes in light and copper conditions. Activates miR857 and its target genes in response to low copper conditions. Involved in cadmium stress response by regulating miR397a, miR398b, miR398c and miR857. Required for iron homeostasis during copper deficiency. This chain is Squamosa promoter-binding-like protein 7 (SPL7), found in Arabidopsis thaliana (Mouse-ear cress).